Reading from the N-terminus, the 455-residue chain is Bifunctional protein GlmU (455 aa).

The tract at residues 1–230 is pyrophosphorylase; the sequence is MANRFAVILA…FDETIGINDR (230 aa). Residues 9-12, Lys-23, Gln-73, and 78-79 each bind UDP-N-acetyl-alpha-D-glucosamine; these read LAAG and GT. Asp-103 provides a ligand contact to Mg(2+). Residues Gly-140, Glu-155, Asn-170, and Asn-228 each coordinate UDP-N-acetyl-alpha-D-glucosamine. Asn-228 contributes to the Mg(2+) binding site. Residues 231–251 form a linker region; the sequence is IALAEAEKIMKKRINEQHMRN. The N-acetyltransferase stretch occupies residues 252–455; that stretch reads GVSIIDPEQT…KEEYASKFKK (204 aa). Residues Arg-333 and Lys-351 each coordinate UDP-N-acetyl-alpha-D-glucosamine. The active-site Proton acceptor is His-363. UDP-N-acetyl-alpha-D-glucosamine contacts are provided by Tyr-366 and Asn-377. Acetyl-CoA-binding positions include 386–387, Ala-423, and Arg-440; that span reads NY.

This sequence in the N-terminal section; belongs to the N-acetylglucosamine-1-phosphate uridyltransferase family. It in the C-terminal section; belongs to the transferase hexapeptide repeat family. In terms of assembly, homotrimer. It depends on Mg(2+) as a cofactor.

The protein resides in the cytoplasm. It carries out the reaction alpha-D-glucosamine 1-phosphate + acetyl-CoA = N-acetyl-alpha-D-glucosamine 1-phosphate + CoA + H(+). The catalysed reaction is N-acetyl-alpha-D-glucosamine 1-phosphate + UTP + H(+) = UDP-N-acetyl-alpha-D-glucosamine + diphosphate. The protein operates within nucleotide-sugar biosynthesis; UDP-N-acetyl-alpha-D-glucosamine biosynthesis; N-acetyl-alpha-D-glucosamine 1-phosphate from alpha-D-glucosamine 6-phosphate (route II): step 2/2. Its pathway is nucleotide-sugar biosynthesis; UDP-N-acetyl-alpha-D-glucosamine biosynthesis; UDP-N-acetyl-alpha-D-glucosamine from N-acetyl-alpha-D-glucosamine 1-phosphate: step 1/1. It functions in the pathway bacterial outer membrane biogenesis; LPS lipid A biosynthesis. Functionally, catalyzes the last two sequential reactions in the de novo biosynthetic pathway for UDP-N-acetylglucosamine (UDP-GlcNAc). The C-terminal domain catalyzes the transfer of acetyl group from acetyl coenzyme A to glucosamine-1-phosphate (GlcN-1-P) to produce N-acetylglucosamine-1-phosphate (GlcNAc-1-P), which is converted into UDP-GlcNAc by the transfer of uridine 5-monophosphate (from uridine 5-triphosphate), a reaction catalyzed by the N-terminal domain. The sequence is that of Bifunctional protein GlmU from Oceanobacillus iheyensis (strain DSM 14371 / CIP 107618 / JCM 11309 / KCTC 3954 / HTE831).